A 734-amino-acid chain; its full sequence is Photosystem I P700 chlorophyll a apoprotein A2 (734 aa).

8 helical membrane passes run 46 to 69 (IFAS…FHVA), 135 to 158 (LYTG…LHLQ), 175 to 199 (LNHH…HVAI), 273 to 291 (IAHH…GHMY), 330 to 353 (IHFQ…QHMY), 369 to 395 (AALY…IFFI), 417 to 439 (AIIS…LYVH), and 517 to 535 (FLVH…LILV). Positions 559 and 568 each coordinate [4Fe-4S] cluster. The next 2 membrane-spanning stretches (helical) occupy residues 575–596 (AFYL…YWHW) and 643–665 (LSVW…MFLI). Chlorophyll a-binding residues include histidine 654, methionine 662, and tyrosine 670. Tryptophan 671 serves as a coordination point for phylloquinone. A helical transmembrane segment spans residues 707-727 (LVGLAHFSVGYIFTYAAFLIA).

The protein belongs to the PsaA/PsaB family. As to quaternary structure, the PsaA/B heterodimer binds the P700 chlorophyll special pair and subsequent electron acceptors. PSI consists of a core antenna complex that captures photons, and an electron transfer chain that converts photonic excitation into a charge separation. The eukaryotic PSI reaction center is composed of at least 11 subunits. Requires P700 is a chlorophyll a/chlorophyll a' dimer, A0 is one or more chlorophyll a, A1 is one or both phylloquinones and FX is a shared 4Fe-4S iron-sulfur center. as cofactor.

Its subcellular location is the plastid. The protein localises to the chloroplast thylakoid membrane. It catalyses the reaction reduced [plastocyanin] + hnu + oxidized [2Fe-2S]-[ferredoxin] = oxidized [plastocyanin] + reduced [2Fe-2S]-[ferredoxin]. In terms of biological role, psaA and PsaB bind P700, the primary electron donor of photosystem I (PSI), as well as the electron acceptors A0, A1 and FX. PSI is a plastocyanin-ferredoxin oxidoreductase, converting photonic excitation into a charge separation, which transfers an electron from the donor P700 chlorophyll pair to the spectroscopically characterized acceptors A0, A1, FX, FA and FB in turn. Oxidized P700 is reduced on the lumenal side of the thylakoid membrane by plastocyanin. In Oryza sativa (Rice), this protein is Photosystem I P700 chlorophyll a apoprotein A2.